A 291-amino-acid chain; its full sequence is Phytanoyl-CoA dioxygenase domain-containing protein 1 (291 aa).

Thr-55 carries the post-translational modification Phosphothreonine. Residues Lys-102, Met-141, 156–158 (HQD), and Trp-174 contribute to the 2-oxoglutarate site. Fe cation contacts are provided by His-156 and Asp-158. His-246 lines the Fe cation pocket. 2-oxoglutarate is bound by residues Ser-248 and Arg-257.

This sequence belongs to the PhyH family. PHYHD1 subfamily. Requires Fe cation as cofactor.

Functionally, 2-oxoglutarate(2OG)-dependent dioxygenase that catalyzes the conversion of 2-oxoglutarate to succinate and CO(2) in an iron-dependent manner. However, does not couple 2OG turnover to the hydroxylation of acyl-coenzyme A derivatives, implying that it is not directly involved in phytanoyl coenzyme-A metabolism. Does not show detectable activity towards fatty acid CoA thioesters. The polypeptide is Phytanoyl-CoA dioxygenase domain-containing protein 1 (Phyhd1) (Rattus norvegicus (Rat)).